A 117-amino-acid chain; its full sequence is Large ribosomal subunit protein uL18 (117 aa).

Belongs to the universal ribosomal protein uL18 family. As to quaternary structure, part of the 50S ribosomal subunit; part of the 5S rRNA/L5/L18/L25 subcomplex. Contacts the 5S and 23S rRNAs.

This is one of the proteins that bind and probably mediate the attachment of the 5S RNA into the large ribosomal subunit, where it forms part of the central protuberance. The protein is Large ribosomal subunit protein uL18 of Alkalilimnicola ehrlichii (strain ATCC BAA-1101 / DSM 17681 / MLHE-1).